Here is a 181-residue protein sequence, read N- to C-terminus: uncharacterized protein (181 aa).

This is an uncharacterized protein from Enterobacteria phage T4 (Bacteriophage T4).